The sequence spans 625 residues: Mesothelin (625 aa).

A signal peptide spans 1–35 (MALPTAQPLLGSCGSPICSRSFLLLLLSLGWLPLL). Serine 202 is subject to Phosphoserine. A disulfide bond links cysteine 304 and cysteine 328. N-linked (GlcNAc...) asparagine glycosylation is found at asparagine 390, asparagine 488, and asparagine 517. Serine 600 is lipidated: GPI-anchor amidated serine. The propeptide at 601 to 625 (SGAPLLGPGFVFAWIPALLSALRLS) is removed in mature form.

Belongs to the mesothelin family. Interacts with MUC16. In terms of processing, proteolytically cleaved by a furin-like convertase to generate megakaryocyte-potentiating factor (MPF), and the cleaved form of mesothelin. In terms of tissue distribution, specifically expressed in lung. Overexpressed in hereditary renal carcinoma developed by Eker rats.

It localises to the cell membrane. It is found in the golgi apparatus. Its subcellular location is the secreted. Its function is as follows. Membrane-anchored forms may play a role in cellular adhesion. Functionally, megakaryocyte-potentiating factor (MPF) may potentiate megakaryocyte colony formation. The sequence is that of Mesothelin (Msln) from Rattus norvegicus (Rat).